The primary structure comprises 391 residues: Methionine import ATP-binding protein MetN 2 (391 aa).

Residues 44–280 enclose the ABC transporter domain; sequence VHVGKVFATP…PRHGATRALL (237 aa). Residue 77–84 participates in ATP binding; sequence GRSGAGKS.

Belongs to the ABC transporter superfamily. Methionine importer (TC 3.A.1.24) family. As to quaternary structure, the complex is composed of two ATP-binding proteins (MetN), two transmembrane proteins (MetI) and a solute-binding protein (MetQ).

Its subcellular location is the cell inner membrane. It carries out the reaction L-methionine(out) + ATP + H2O = L-methionine(in) + ADP + phosphate + H(+). The enzyme catalyses D-methionine(out) + ATP + H2O = D-methionine(in) + ADP + phosphate + H(+). Part of the ABC transporter complex MetNIQ involved in methionine import. Responsible for energy coupling to the transport system. The protein is Methionine import ATP-binding protein MetN 2 of Burkholderia ambifaria (strain ATCC BAA-244 / DSM 16087 / CCUG 44356 / LMG 19182 / AMMD) (Burkholderia cepacia (strain AMMD)).